The following is a 224-amino-acid chain: Ribosome maturation factor RimM (224 aa).

A compositionally biased stretch (low complexity) spans 1–12 (MARRPGSSSRGP). Disordered regions lie at residues 1 to 46 (MARR…PSLV) and 204 to 224 (VADPPEDLFAPPGPKPADDPG). Residues 137 to 211 (EDEFFLTDLI…KVVADPPEDL (75 aa)) form the PRC barrel domain.

Belongs to the RimM family. Binds ribosomal protein uS19.

The protein localises to the cytoplasm. An accessory protein needed during the final step in the assembly of 30S ribosomal subunit, possibly for assembly of the head region. Essential for efficient processing of 16S rRNA. May be needed both before and after RbfA during the maturation of 16S rRNA. It has affinity for free ribosomal 30S subunits but not for 70S ribosomes. The sequence is that of Ribosome maturation factor RimM from Methylorubrum populi (strain ATCC BAA-705 / NCIMB 13946 / BJ001) (Methylobacterium populi).